Reading from the N-terminus, the 754-residue chain is Lysophospholipase 3 (754 aa).

Positions 1–19 (MKVNLKLIIGSILISQAQA) are cleaved as a signal peptide. 2 stretches are compositionally biased toward low complexity: residues 25-40 (SSGSSSSSDSSPSETG) and 50-88 (LFGSGSSLTQSSSAQASSTKSTSDSASSTDSSLFSSSNS). Residues 25–88 (SSGSSSSSDS…DSSLFSSSNS (64 aa)) form a disordered region. N112, N156, N174, N317, N325, N354, N391, N423, N470, N510, N515, N560, N577, N597, N625, and N631 each carry an N-linked (GlcNAc...) asparagine glycan. The PLA2c domain occupies 114-670 (TCPSKKTFIR…QEYCWTGGFK (557 aa)). The segment covering 687-721 (KTHTSGGTSSTTQQTSTTTGSSANGGSSSTGSSSS) has biased composition (low complexity). The disordered stretch occupies residues 687–727 (KTHTSGGTSSTTQQTSTTTGSSANGGSSSTGSSSSSKKKNG).

This sequence belongs to the lysophospholipase family.

Its subcellular location is the secreted. It catalyses the reaction a 1-acyl-sn-glycero-3-phosphocholine + H2O = sn-glycerol 3-phosphocholine + a fatty acid + H(+). In terms of biological role, catalyzes the release of fatty acids from lysophospholipids. Phospholipase B may well contribute to pathogenicity by abetting the fungus in damaging and traversing host cell membranes, processes which likely increase the rapidity of disseminated infection. The sequence is that of Lysophospholipase 3 (PLB3) from Candida albicans (Yeast).